A 206-amino-acid chain; its full sequence is N-(5'-phosphoribosyl)anthranilate isomerase (206 aa).

Belongs to the TrpF family.

It carries out the reaction N-(5-phospho-beta-D-ribosyl)anthranilate = 1-(2-carboxyphenylamino)-1-deoxy-D-ribulose 5-phosphate. Its pathway is amino-acid biosynthesis; L-tryptophan biosynthesis; L-tryptophan from chorismate: step 3/5. The polypeptide is N-(5'-phosphoribosyl)anthranilate isomerase (Pseudomonas syringae pv. tomato (strain ATCC BAA-871 / DC3000)).